Here is a 485-residue protein sequence, read N- to C-terminus: NADH-quinone oxidoreductase subunit N (485 aa).

14 consecutive transmembrane segments (helical) span residues 8-28 (LIAL…MLSI), 35-55 (FLNA…LWFV), 75-95 (LYTG…YPWL), 105-125 (FYLL…ANHL), 127-147 (ALFL…GYAF), 159-179 (YTIL…LVYA), 203-223 (LLAG…LVPF), 235-255 (PAPV…GVVM), 271-291 (VVLG…ALSQ), 297-317 (LLGY…IALQ), 326-346 (VGVY…VVSL), 374-394 (AVMT…GFIG), 408-430 (WWLV…RVAV), and 455-475 (IVVL…QPLI).

The protein belongs to the complex I subunit 2 family. NDH-1 is composed of 13 different subunits. Subunits NuoA, H, J, K, L, M, N constitute the membrane sector of the complex.

The protein localises to the cell inner membrane. The catalysed reaction is a quinone + NADH + 5 H(+)(in) = a quinol + NAD(+) + 4 H(+)(out). In terms of biological role, NDH-1 shuttles electrons from NADH, via FMN and iron-sulfur (Fe-S) centers, to quinones in the respiratory chain. The immediate electron acceptor for the enzyme in this species is believed to be ubiquinone. Couples the redox reaction to proton translocation (for every two electrons transferred, four hydrogen ions are translocated across the cytoplasmic membrane), and thus conserves the redox energy in a proton gradient. In Klebsiella pneumoniae (strain 342), this protein is NADH-quinone oxidoreductase subunit N.